The chain runs to 237 residues: Arginine-binding periplasmic protein (237 aa).

A signal peptide spans 1–18; it reads MKKTLLTLLFGCVVTAQA.

The protein belongs to the bacterial solute-binding protein 3 family.

The protein resides in the periplasm. Functionally, binds arginine; part of the arginine periplasmic transport system. This Mannheimia haemolytica (Pasteurella haemolytica) protein is Arginine-binding periplasmic protein (lapT).